Reading from the N-terminus, the 135-residue chain is Large ribosomal subunit protein uL16c (135 aa).

A compositionally biased stretch (basic residues) spans 1-17 (MLSPKRTKFRKQHRNRM). Residues 1 to 22 (MLSPKRTKFRKQHRNRMNGKAS) form a disordered region.

The protein belongs to the universal ribosomal protein uL16 family. As to quaternary structure, part of the 50S ribosomal subunit.

The protein localises to the plastid. It is found in the chloroplast. The polypeptide is Large ribosomal subunit protein uL16c (Gracilaria tenuistipitata (Red alga)).